Here is a 333-residue protein sequence, read N- to C-terminus: Glyceraldehyde-3-phosphate dehydrogenase (333 aa).

NAD(+)-binding positions include 11–12, aspartate 32, and arginine 77; that span reads RI. Residues 148–150, threonine 179, 208–209, and arginine 231 each bind D-glyceraldehyde 3-phosphate; these read SCT and TG. Cysteine 149 serves as the catalytic Nucleophile. Asparagine 313 serves as a coordination point for NAD(+).

The protein belongs to the glyceraldehyde-3-phosphate dehydrogenase family. In terms of assembly, homotetramer.

The protein resides in the cytoplasm. It catalyses the reaction D-glyceraldehyde 3-phosphate + phosphate + NAD(+) = (2R)-3-phospho-glyceroyl phosphate + NADH + H(+). The protein operates within carbohydrate degradation; glycolysis; pyruvate from D-glyceraldehyde 3-phosphate: step 1/5. The polypeptide is Glyceraldehyde-3-phosphate dehydrogenase (Gapdh) (Glossina morsitans morsitans (Savannah tsetse fly)).